A 315-amino-acid chain; its full sequence is Aspartate carbamoyltransferase catalytic subunit (315 aa).

Carbamoyl phosphate-binding residues include arginine 65 and threonine 66. Residue lysine 93 participates in L-aspartate binding. Residues arginine 115, histidine 145, and glutamine 148 each contribute to the carbamoyl phosphate site. The L-aspartate site is built by arginine 179 and arginine 234. Residues glycine 275 and proline 276 each coordinate carbamoyl phosphate.

Belongs to the aspartate/ornithine carbamoyltransferase superfamily. ATCase family. Heterododecamer (2C3:3R2) of six catalytic PyrB chains organized as two trimers (C3), and six regulatory PyrI chains organized as three dimers (R2).

It catalyses the reaction carbamoyl phosphate + L-aspartate = N-carbamoyl-L-aspartate + phosphate + H(+). The protein operates within pyrimidine metabolism; UMP biosynthesis via de novo pathway; (S)-dihydroorotate from bicarbonate: step 2/3. Its function is as follows. Catalyzes the condensation of carbamoyl phosphate and aspartate to form carbamoyl aspartate and inorganic phosphate, the committed step in the de novo pyrimidine nucleotide biosynthesis pathway. The protein is Aspartate carbamoyltransferase catalytic subunit of Xanthomonas axonopodis pv. citri (strain 306).